Reading from the N-terminus, the 533-residue chain is Phosphoenolpyruvate carboxykinase (ATP) (533 aa).

Substrate is bound by residues arginine 59, tyrosine 199, and lysine 205. ATP contacts are provided by residues lysine 205, histidine 224, and 240-248; that span reads GLSGTGKTT. Mn(2+) contacts are provided by lysine 205 and histidine 224. Residue aspartate 261 participates in Mn(2+) binding. Residues glutamate 289, arginine 325, 441–442, and threonine 447 contribute to the ATP site; that span reads RI. Arginine 325 provides a ligand contact to substrate.

Belongs to the phosphoenolpyruvate carboxykinase (ATP) family. As to quaternary structure, monomer. Requires Mn(2+) as cofactor.

The protein resides in the cytoplasm. It carries out the reaction oxaloacetate + ATP = phosphoenolpyruvate + ADP + CO2. It participates in carbohydrate biosynthesis; gluconeogenesis. Involved in the gluconeogenesis. Catalyzes the conversion of oxaloacetate (OAA) to phosphoenolpyruvate (PEP) through direct phosphoryl transfer between the nucleoside triphosphate and OAA. This Idiomarina loihiensis (strain ATCC BAA-735 / DSM 15497 / L2-TR) protein is Phosphoenolpyruvate carboxykinase (ATP).